Consider the following 287-residue polypeptide: Glutamate racemase (287 aa).

A compositionally biased stretch (polar residues) spans 1 to 15; it reads MATKPQDANTTSREA. Residues 1–25 are disordered; sequence MATKPQDANTTSREAITSKADSPPR. Residues 32–33 and 64–65 contribute to the substrate site; these read DS and YG. Cys-96 acts as the Proton donor/acceptor in catalysis. 97-98 serves as a coordination point for substrate; sequence NT. The active-site Proton donor/acceptor is Cys-208. 209–210 provides a ligand contact to substrate; it reads TH.

It belongs to the aspartate/glutamate racemases family.

It catalyses the reaction L-glutamate = D-glutamate. Its pathway is cell wall biogenesis; peptidoglycan biosynthesis. Its function is as follows. Provides the (R)-glutamate required for cell wall biosynthesis. In Yersinia pseudotuberculosis serotype IB (strain PB1/+), this protein is Glutamate racemase.